The primary structure comprises 218 residues: DNA replication complex GINS protein psf3 (218 aa).

Residues 147–163 (GGGSSYHGRDGGGAGGK) show a composition bias toward gly residues. The interval 147 to 182 (GGGSSYHGRDGGGAGGKGKGKATKDDNASNLGVGGA) is disordered.

It belongs to the GINS3/PSF3 family. In terms of assembly, component of the GINS complex which is a heterotetramer of div-26/sld5, drc-1/psf1, drc-2/psf2 and drc-3/psf3.

The protein localises to the nucleus. The GINS complex plays an essential role in the initiation of DNA replication. This is DNA replication complex GINS protein psf3 (drc-3) from Neurospora crassa (strain ATCC 24698 / 74-OR23-1A / CBS 708.71 / DSM 1257 / FGSC 987).